A 136-amino-acid polypeptide reads, in one-letter code: MSFNCSTGNFSRSLGGYLGVPVSTCDSFYPSNVVYSPSTFQLGSTLYSDCQENFFRPVSFQTPCAVTRSFQTSCSHPQNFIFRSPCQTIYTGSLGSGNIGLGSFGCGSTGFQSLGCGSNFCSPTYVSSRSCRSSYY.

Belongs to the PMG family. In terms of assembly, interacts with hair keratins.

In the hair cortex, hair keratin intermediate filaments are embedded in an interfilamentous matrix, consisting of hair keratin-associated proteins (KRTAP), which are essential for the formation of a rigid and resistant hair shaft through their extensive disulfide bond cross-linking with abundant cysteine residues of hair keratins. The matrix proteins include the high-sulfur and high-glycine-tyrosine keratins. The polypeptide is Keratin-associated protein 15-1 (KRTAP15-1) (Capra hircus (Goat)).